The chain runs to 292 residues: uncharacterized protein (292 aa).

A Glycyl lysine isopeptide (Lys-Gly) (interchain with G-Cter in SUMO2) cross-link involves residue K8. The segment at T47–E67 is disordered. Residue K76 forms a Glycyl lysine isopeptide (Lys-Gly) (interchain with G-Cter in SUMO2) linkage. N94 is modified (phosphothreonine). A phosphoserine mark is found at K96 and F97. Residues E122–D292 are disordered. Residue T123 is modified to Phosphothreonine. A phosphoserine mark is found at S125 and D126. A compositionally biased stretch (polar residues) spans Q128–V140. Residues S147–K173 are compositionally biased toward basic residues. Residues T180–S194 are compositionally biased toward polar residues. 2 stretches are compositionally biased toward basic residues: residues R197–K215 and K247–H259. Positions A280–D292 are enriched in basic and acidic residues.

This is an uncharacterized protein from Homo sapiens (Human).